We begin with the raw amino-acid sequence, 214 residues long: Predicted GPI-anchored protein 57 (214 aa).

The first 18 residues, 1 to 18 (MLFTQLIILFTFISQIIC), serve as a signal peptide directing secretion. The disordered stretch occupies residues 36 to 101 (RGSSGHSSGG…SSGSSSGSRN (66 aa)). Residues 42–60 (SSGGGHSSSGSHSSGGGHS) are compositionally biased toward gly residues. The segment covering 76 to 85 (SGSSSGSSSG) has biased composition (low complexity). Asn-182 carries an N-linked (GlcNAc...) asparagine glycan. Gly-191 carries the GPI-anchor amidated glycine lipid modification. Positions 192–214 (VSLNIPSTHFYVIGLAAAYSIVL) are cleaved as a propeptide — removed in mature form.

It belongs to the PGA37 family.

It is found in the secreted. It localises to the cell membrane. Functionally, predicted GPI-anchored protein which may have a role during host infection. This is Predicted GPI-anchored protein 57 (PGA57) from Candida albicans (strain SC5314 / ATCC MYA-2876) (Yeast).